The chain runs to 183 residues: Probable calcium-binding protein CML47 (183 aa).

EF-hand domains are found at residues 112–147 (MGKE…LGYD) and 149–183 (CTKM…KSFS). 9 residues coordinate Ca(2+): D125, N127, D129, E136, D162, N164, D166, K168, and E173.

In terms of biological role, potential calcium sensor. This chain is Probable calcium-binding protein CML47 (CML47), found in Arabidopsis thaliana (Mouse-ear cress).